Consider the following 446-residue polypeptide: Citrate/sodium symporter (446 aa).

5 helical membrane-spanning segments follow: residues 23 to 43, 46 to 66, 79 to 99, 110 to 130, and 148 to 168; these read IFGMPLPLYAFALITLLLSHF, AIPTDLVGGFALMFVMGAIFG, IGGAPVMIFLVAAYFVYAGIF, VMDKSNFLNLFIAVLITGAIL, and ILAGIVGASLFGIVIGLCFGI. The Na(+) site is built by Ile181 and Gly183. Residues Asn186 and Gly187 each contribute to the citrate site. A run of 5 helical transmembrane segments spans residues 213-233, 267-287, 289-309, 335-355, and 364-384; these read IAILTIANIFAIIFAALLDMI, ETAVGMVLSTTCFLLAYVVAK, ILPSIGGVSIHYFAWMVLIVA, QLLWVLMVGVGVCYTDLQEII, and VIAAIIVVGAVVGAAIGGWLI. 2 residues coordinate Na(+): Met399 and Asn401. Residues Arg402, Gly404, Ser405, and Arg428 each coordinate citrate. A helical transmembrane segment spans residues 425-445; sequence ISSRLGGGIVLVIASIVFSMM.

It belongs to the 2-hydroxycarboxylate transporter (2-HCT) (TC 2.A.24) family. As to quaternary structure, homodimer.

It localises to the cell inner membrane. It carries out the reaction citrate(out) + 2 Na(+)(out) = citrate(in) + 2 Na(+)(in). Its function is as follows. Secondary active transporter that catalyzes the uptake of citrate across the membrane with the concomitant uptake of sodium. Is specific for citrate. The sequence is that of Citrate/sodium symporter from Salmonella dublin.